The following is an 82-amino-acid chain: UPF0180 protein BH2667 (82 aa).

It belongs to the UPF0180 family.

The chain is UPF0180 protein BH2667 from Halalkalibacterium halodurans (strain ATCC BAA-125 / DSM 18197 / FERM 7344 / JCM 9153 / C-125) (Bacillus halodurans).